Consider the following 491-residue polypeptide: MTKTKEIIKTGWNLDSTYAHLPKQFFTIITPNPVSAPKLVILNEPLATVLGLDSEALQSKDSLEVLAGNRALEGALPLAQAYAGHQFGHFALLGDGRALLLGEQITPSGERFDLQLKGSGPTPYSRGGDGRASLGPMLREYIISEAMHALGIATTRSLAVVTTGEAVIRETDLPGAILTRVAASHLRVGTFEYIAKWGTVQELRALADYTLQRHFPEVGAVENPYLSLVQEVIKGQAALIAKWQLVGFIHGVMNTDNMTISGETIDYGPCAFMDSYDPKTVFSSIDRQGRYAYGNQPHIAGWNLARFAETLLPLLHEDQDEAVKLAQDEISRFIQLYHSHWLTGMRAKLGIFNEEVQDESLIEELLKMMEKNHADYTNTFRALSFETLEGTALFGTTEFAQWHELWRARLNRQQESKDASQQLMQNSNPGVIPRNHRVEAALDAAVKQGDYSVMEQLLNVLSKPYAHSPEQAEYCMPPAPSNRPYRTFCGT.

Residues G94, G96, R97, K117, D129, G130, R180, and R187 each coordinate ATP. D256 (proton acceptor) is an active-site residue. Positions 257 and 266 each coordinate Mg(2+). An ATP-binding site is contributed by D266.

The protein belongs to the SELO family. It depends on Mg(2+) as a cofactor. The cofactor is Mn(2+).

It carries out the reaction L-seryl-[protein] + ATP = 3-O-(5'-adenylyl)-L-seryl-[protein] + diphosphate. It catalyses the reaction L-threonyl-[protein] + ATP = 3-O-(5'-adenylyl)-L-threonyl-[protein] + diphosphate. The enzyme catalyses L-tyrosyl-[protein] + ATP = O-(5'-adenylyl)-L-tyrosyl-[protein] + diphosphate. The catalysed reaction is L-histidyl-[protein] + UTP = N(tele)-(5'-uridylyl)-L-histidyl-[protein] + diphosphate. It carries out the reaction L-seryl-[protein] + UTP = O-(5'-uridylyl)-L-seryl-[protein] + diphosphate. It catalyses the reaction L-tyrosyl-[protein] + UTP = O-(5'-uridylyl)-L-tyrosyl-[protein] + diphosphate. Functionally, nucleotidyltransferase involved in the post-translational modification of proteins. It can catalyze the addition of adenosine monophosphate (AMP) or uridine monophosphate (UMP) to a protein, resulting in modifications known as AMPylation and UMPylation. The sequence is that of Protein nucleotidyltransferase YdiU from Alkaliphilus metalliredigens (strain QYMF).